Here is a 375-residue protein sequence, read N- to C-terminus: Erythronate-4-phosphate dehydrogenase (375 aa).

Positions 45 and 66 each coordinate substrate. The NAD(+) site is built by Asp146 and Thr175. Arg208 is a catalytic residue. Asp232 is a binding site for NAD(+). Glu237 is an active-site residue. His254 (proton donor) is an active-site residue. Gly257 is an NAD(+) binding site. Residue Tyr258 coordinates substrate.

Belongs to the D-isomer specific 2-hydroxyacid dehydrogenase family. PdxB subfamily. In terms of assembly, homodimer.

Its subcellular location is the cytoplasm. The catalysed reaction is 4-phospho-D-erythronate + NAD(+) = (R)-3-hydroxy-2-oxo-4-phosphooxybutanoate + NADH + H(+). It participates in cofactor biosynthesis; pyridoxine 5'-phosphate biosynthesis; pyridoxine 5'-phosphate from D-erythrose 4-phosphate: step 2/5. In terms of biological role, catalyzes the oxidation of erythronate-4-phosphate to 3-hydroxy-2-oxo-4-phosphonooxybutanoate. This Yersinia pseudotuberculosis serotype O:1b (strain IP 31758) protein is Erythronate-4-phosphate dehydrogenase.